A 236-amino-acid chain; its full sequence is UPF0502 protein BamMC406_5439 (236 aa).

The protein belongs to the UPF0502 family.

In Burkholderia ambifaria (strain MC40-6), this protein is UPF0502 protein BamMC406_5439.